The following is a 424-amino-acid chain: Kynureninase (424 aa).

Pyridoxal 5'-phosphate-binding positions include Leu-105, Ser-106, 133 to 136 (FPTD), Asp-218, His-221, and Tyr-243. N6-(pyridoxal phosphate)lysine is present on Lys-244. Pyridoxal 5'-phosphate contacts are provided by Trp-274 and Asn-302.

Belongs to the kynureninase family. Homodimer. Requires pyridoxal 5'-phosphate as cofactor.

The catalysed reaction is L-kynurenine + H2O = anthranilate + L-alanine + H(+). The enzyme catalyses 3-hydroxy-L-kynurenine + H2O = 3-hydroxyanthranilate + L-alanine + H(+). It functions in the pathway amino-acid degradation; L-kynurenine degradation; L-alanine and anthranilate from L-kynurenine: step 1/1. The protein operates within cofactor biosynthesis; NAD(+) biosynthesis; quinolinate from L-kynurenine: step 2/3. Catalyzes the cleavage of L-kynurenine (L-Kyn) and L-3-hydroxykynurenine (L-3OHKyn) into anthranilic acid (AA) and 3-hydroxyanthranilic acid (3-OHAA), respectively. This is Kynureninase from Stenotrophomonas maltophilia (strain K279a).